The following is a 339-amino-acid chain: Phosphoribosylformylglycinamidine cyclo-ligase (339 aa).

It belongs to the AIR synthase family.

It localises to the cytoplasm. The catalysed reaction is 2-formamido-N(1)-(5-O-phospho-beta-D-ribosyl)acetamidine + ATP = 5-amino-1-(5-phospho-beta-D-ribosyl)imidazole + ADP + phosphate + H(+). It participates in purine metabolism; IMP biosynthesis via de novo pathway; 5-amino-1-(5-phospho-D-ribosyl)imidazole from N(2)-formyl-N(1)-(5-phospho-D-ribosyl)glycinamide: step 2/2. The polypeptide is Phosphoribosylformylglycinamidine cyclo-ligase (Streptococcus thermophilus (strain ATCC BAA-491 / LMD-9)).